A 368-amino-acid polypeptide reads, in one-letter code: Phosphoserine aminotransferase (368 aa).

Arg-42 provides a ligand contact to L-glutamate. Pyridoxal 5'-phosphate-binding positions include Ala-76–Ser-77, Trp-102, Thr-152, Asp-179, and Gln-202. Lys-203 carries the post-translational modification N6-(pyridoxal phosphate)lysine. Asn-245–Thr-246 is a binding site for pyridoxal 5'-phosphate.

It belongs to the class-V pyridoxal-phosphate-dependent aminotransferase family. SerC subfamily. In terms of assembly, homodimer. It depends on pyridoxal 5'-phosphate as a cofactor.

It localises to the cytoplasm. The catalysed reaction is O-phospho-L-serine + 2-oxoglutarate = 3-phosphooxypyruvate + L-glutamate. It catalyses the reaction 4-(phosphooxy)-L-threonine + 2-oxoglutarate = (R)-3-hydroxy-2-oxo-4-phosphooxybutanoate + L-glutamate. It participates in amino-acid biosynthesis; L-serine biosynthesis; L-serine from 3-phospho-D-glycerate: step 2/3. The protein operates within cofactor biosynthesis; pyridoxine 5'-phosphate biosynthesis; pyridoxine 5'-phosphate from D-erythrose 4-phosphate: step 3/5. In terms of biological role, catalyzes the reversible conversion of 3-phosphohydroxypyruvate to phosphoserine and of 3-hydroxy-2-oxo-4-phosphonooxybutanoate to phosphohydroxythreonine. This chain is Phosphoserine aminotransferase, found in Nitrosomonas europaea (strain ATCC 19718 / CIP 103999 / KCTC 2705 / NBRC 14298).